A 340-amino-acid chain; its full sequence is Glyceraldehyde-3-phosphate dehydrogenase, cytosolic (340 aa).

NAD(+)-binding positions include 16–17 (RI), Asp38, and Arg85. D-glyceraldehyde 3-phosphate contacts are provided by residues 156-158 (SCT), Thr187, 216-217 (TG), and Arg239. Cys157 acts as the Nucleophile in catalysis. Asn321 lines the NAD(+) pocket.

Belongs to the glyceraldehyde-3-phosphate dehydrogenase family. As to quaternary structure, homotetramer.

The protein resides in the cytoplasm. The enzyme catalyses D-glyceraldehyde 3-phosphate + phosphate + NAD(+) = (2R)-3-phospho-glyceroyl phosphate + NADH + H(+). It participates in carbohydrate degradation; glycolysis; pyruvate from D-glyceraldehyde 3-phosphate: step 1/5. Its function is as follows. Key enzyme in glycolysis that catalyzes the first step of the pathway by converting D-glyceraldehyde 3-phosphate (G3P) into 3-phospho-D-glyceroyl phosphate. Essential for the maintenance of cellular ATP levels and carbohydrate metabolism. This Ginkgo biloba (Ginkgo) protein is Glyceraldehyde-3-phosphate dehydrogenase, cytosolic.